The following is a 1368-amino-acid chain: DNA-directed RNA polymerase subunit beta (1368 aa).

The protein belongs to the RNA polymerase beta chain family. The RNAP catalytic core consists of 2 alpha, 1 beta, 1 beta' and 1 omega subunit. When a sigma factor is associated with the core the holoenzyme is formed, which can initiate transcription.

The catalysed reaction is RNA(n) + a ribonucleoside 5'-triphosphate = RNA(n+1) + diphosphate. DNA-dependent RNA polymerase catalyzes the transcription of DNA into RNA using the four ribonucleoside triphosphates as substrates. The polypeptide is DNA-directed RNA polymerase subunit beta (Ralstonia pickettii (strain 12J)).